The chain runs to 261 residues: Cytochrome c oxidase subunit 3 (261 aa).

Over 1–15 (MTHQTHAYHTVNPSP) the chain is Mitochondrial matrix. A helical membrane pass occupies residues 16 to 34 (WPLTGALSALLMTSGLIMW). Over 35–40 (FHFNSP) the chain is Mitochondrial intermembrane. A helical transmembrane segment spans residues 41–66 (LLLVLGLTTNFLTMYQWWRDIIREST). Residues 67–72 (FQGHHT) are Mitochondrial matrix-facing. A helical membrane pass occupies residues 73-105 (TIVQKGLRYGMILFIVSEVFFFAGFFWAFYHSS). The Mitochondrial intermembrane segment spans residues 106 to 128 (LAPTPELGGCWPPTGINPLNPLE). A helical membrane pass occupies residues 129-152 (VPLLNTSVLLASGVSITWAHHSLM). Topologically, residues 153-155 (EGH) are mitochondrial matrix. Residues 156-183 (RKHMLQALFITIALGVYFTLLQASEYYE) traverse the membrane as a helical segment. At 184 to 190 (APFTISD) the chain is on the mitochondrial intermembrane side. The chain crosses the membrane as a helical span at residues 191–223 (GIYGSTFFVATGFHGLHVIIGSSFLIVCFMRQL). Over 224-232 (KFHFTSSHH) the chain is Mitochondrial matrix. Residues 233-256 (FGFEAAAWYWHFVDVVWLFLYVSI) traverse the membrane as a helical segment. Topologically, residues 257–261 (YWWGS) are mitochondrial intermembrane.

This sequence belongs to the cytochrome c oxidase subunit 3 family. In terms of assembly, component of the cytochrome c oxidase (complex IV, CIV), a multisubunit enzyme composed of 14 subunits. The complex is composed of a catalytic core of 3 subunits MT-CO1, MT-CO2 and MT-CO3, encoded in the mitochondrial DNA, and 11 supernumerary subunits COX4I, COX5A, COX5B, COX6A, COX6B, COX6C, COX7A, COX7B, COX7C, COX8 and NDUFA4, which are encoded in the nuclear genome. The complex exists as a monomer or a dimer and forms supercomplexes (SCs) in the inner mitochondrial membrane with NADH-ubiquinone oxidoreductase (complex I, CI) and ubiquinol-cytochrome c oxidoreductase (cytochrome b-c1 complex, complex III, CIII), resulting in different assemblies (supercomplex SCI(1)III(2)IV(1) and megacomplex MCI(2)III(2)IV(2)).

It is found in the mitochondrion inner membrane. It carries out the reaction 4 Fe(II)-[cytochrome c] + O2 + 8 H(+)(in) = 4 Fe(III)-[cytochrome c] + 2 H2O + 4 H(+)(out). Component of the cytochrome c oxidase, the last enzyme in the mitochondrial electron transport chain which drives oxidative phosphorylation. The respiratory chain contains 3 multisubunit complexes succinate dehydrogenase (complex II, CII), ubiquinol-cytochrome c oxidoreductase (cytochrome b-c1 complex, complex III, CIII) and cytochrome c oxidase (complex IV, CIV), that cooperate to transfer electrons derived from NADH and succinate to molecular oxygen, creating an electrochemical gradient over the inner membrane that drives transmembrane transport and the ATP synthase. Cytochrome c oxidase is the component of the respiratory chain that catalyzes the reduction of oxygen to water. Electrons originating from reduced cytochrome c in the intermembrane space (IMS) are transferred via the dinuclear copper A center (CU(A)) of subunit 2 and heme A of subunit 1 to the active site in subunit 1, a binuclear center (BNC) formed by heme A3 and copper B (CU(B)). The BNC reduces molecular oxygen to 2 water molecules using 4 electrons from cytochrome c in the IMS and 4 protons from the mitochondrial matrix. This is Cytochrome c oxidase subunit 3 (MT-CO3) from Dasypus novemcinctus (Nine-banded armadillo).